The chain runs to 247 residues: Opacity protein opA52 (247 aa).

Alanine 1 is a signal peptide.

This sequence belongs to the opacity porin family.

It is found in the cell outer membrane. Its function is as follows. Implicated in a number of adherence functions. OPA proteins are implicated in pathogenesis and are subject to phase variation. The chain is Opacity protein opA52 (opaG) from Neisseria gonorrhoeae.